Here is a 637-residue protein sequence, read N- to C-terminus: Extracellular metalloproteinase MEP (637 aa).

The N-terminal stretch at 1–21 is a signal peptide; sequence MRSVDSLLLLGLTGLASQANA. The propeptide occupies 22–246; that stretch reads HPAKRQPNDS…VVGVVDYVAD (225 aa). An N-linked (GlcNAc...) asparagine glycan is attached at Asn288. His431 contacts Zn(2+). Glu432 is an active-site residue. His435 provides a ligand contact to Zn(2+).

Belongs to the peptidase M36 family. Zn(2+) is required as a cofactor.

Its subcellular location is the secreted. In terms of biological role, secreted metalloproteinase that probably acts as a virulence factor. Cleaves Z.mays Endochitinase A (CHIA) between residues 'Gly-29' and 'Cys-30'. This Fusarium vanettenii (strain ATCC MYA-4622 / CBS 123669 / FGSC 9596 / NRRL 45880 / 77-13-4) (Fusarium solani subsp. pisi) protein is Extracellular metalloproteinase MEP (MEP).